The chain runs to 126 residues: RutC family protein y4sK (126 aa).

The protein belongs to the RutC family.

In Sinorhizobium fredii (strain NBRC 101917 / NGR234), this protein is RutC family protein y4sK.